The chain runs to 58 residues: UPF0391 membrane protein Shew185_1413 (58 aa).

2 helical membrane passes run 6–26 (LVFL…IAGA) and 28–48 (AGIA…SLLI).

This sequence belongs to the UPF0391 family.

It localises to the cell membrane. The protein is UPF0391 membrane protein Shew185_1413 of Shewanella baltica (strain OS185).